We begin with the raw amino-acid sequence, 254 residues long: Leucyl/phenylalanyl-tRNA--protein transferase (254 aa).

This sequence belongs to the L/F-transferase family.

The protein resides in the cytoplasm. The catalysed reaction is N-terminal L-lysyl-[protein] + L-leucyl-tRNA(Leu) = N-terminal L-leucyl-L-lysyl-[protein] + tRNA(Leu) + H(+). The enzyme catalyses N-terminal L-arginyl-[protein] + L-leucyl-tRNA(Leu) = N-terminal L-leucyl-L-arginyl-[protein] + tRNA(Leu) + H(+). It catalyses the reaction L-phenylalanyl-tRNA(Phe) + an N-terminal L-alpha-aminoacyl-[protein] = an N-terminal L-phenylalanyl-L-alpha-aminoacyl-[protein] + tRNA(Phe). Its function is as follows. Functions in the N-end rule pathway of protein degradation where it conjugates Leu, Phe and, less efficiently, Met from aminoacyl-tRNAs to the N-termini of proteins containing an N-terminal arginine or lysine. The polypeptide is Leucyl/phenylalanyl-tRNA--protein transferase (Burkholderia orbicola (strain MC0-3)).